The chain runs to 599 residues: Dachshund homolog 2 (599 aa).

Residues 69–155 (RMVDMHGMKV…LITRKDFETL (87 aa)) form a DACHbox-N region. 3 disordered regions span residues 166-186 (RQMTRKQAVNSSRPGRPPKRS), 237-280 (LQGN…GPQH), and 370-409 (RIPESPSPAPSLEENHRPGSQTSSHTSSSVSSSPSQMDHH). Residues 237 to 262 (LQGNGSQNGTESEPDDLNSNTGGSES) are compositionally biased toward polar residues. A compositionally biased stretch (low complexity) spans 389 to 405 (SQTSSHTSSSVSSSPSQ). Positions 453-533 (SSVETLLTNI…KTKRKLQEAL (81 aa)) are DACHbox-C. A coiled-coil region spans residues 459 to 554 (LTNIQGLLKV…QALKQATTSD (96 aa)).

The protein belongs to the DACH/dachshund family. As to quaternary structure, interacts with SIX6 and EYA2.

The protein localises to the nucleus. Its function is as follows. Transcription factor that is involved in regulation of organogenesis. Seems to be a regulator for SIX1 and SIX6. Seems to act as a corepressor of SIX6 in regulating proliferation by directly repressing cyclin-dependent kinase inhibitors, including the p27Kip1 promoter. Is recruited with SIX6 to the p27Kip1 promoter in embryonal retina. SIX6 corepression also seems to involve NCOR1, TBL1, HDAC1 and HDAC3. May be involved together with PAX3, SIX1, and EYA2 in regulation of myogenesis. In the developing somite, expression of DACH2 and PAX3 is regulated by the overlying ectoderm, and DACH2 and PAX3 positively regulate each other's expression. Probably binds to DNA via its DACHbox-N domain. The protein is Dachshund homolog 2 (DACH2) of Homo sapiens (Human).